Here is a 160-residue protein sequence, read N- to C-terminus: Ribosome maturation factor RimP (160 aa).

Belongs to the RimP family.

It localises to the cytoplasm. In terms of biological role, required for maturation of 30S ribosomal subunits. This chain is Ribosome maturation factor RimP, found in Geobacter sp. (strain M21).